A 561-amino-acid polypeptide reads, in one-letter code: Acyl-CoA ligase ppsA (561 aa).

N21 carries an N-linked (GlcNAc...) asparagine glycan. Residues 71-91 (SILYPALFLAIVGVGAVYMGA) traverse the membrane as a helical segment. An AMP-binding site is contributed by 203 to 214 (MFATSGTSGLPK). N-linked (GlcNAc...) asparagine glycosylation is present at N396. Positions 462–540 (ELEAELAQHP…DSIPRNSGGK (79 aa)) are AMP-binding.

The protein belongs to the ATP-dependent AMP-binding enzyme family.

The protein localises to the membrane. It catalyses the reaction acetate + ATP + CoA = acetyl-CoA + ADP + phosphate. The catalysed reaction is propanoate + ATP + CoA = propanoyl-CoA + AMP + diphosphate. It functions in the pathway secondary metabolite biosynthesis. Its function is as follows. Acyl-CoA ligase; part of the gene cluster that mediates the biosynthesis of 2,4'-dihydroxy-3'-methoxypropiophenone. The first step of the pathway is the conversion of acetate into acetyl-CoA by the acyl-CoA ligase ppsA. Acetyl-CoA is then used as a starter unit by the polyketide synthase ppsB and condensed with 4 malonyl-CoA unit to produce the pentaketide backbone. During polyketide extension, the polykedite chain is probably reduced and dehydrated by the KR and PT domains, respectively. O-methylation seems to be catalyzed by an unknown methyltransferase rather than by the CMeT domain of ppsB. Two hydroxylations and one further decarboxylation step catalyzed by yet unknown enzymes are then required to yield 4'-hydroxy-3'-methoxypropiophenone. PpsC functions as a carrier protein to transport 4'-hydroxy-3'-methoxypropiophenone to a specific cell compartment in which 4'-hydroxy-3'-methoxypropiophenone is hydroxylated to 2,4'-dihydroxy-3'-methoxypropiophenone by a still to be identified enzyme. The protein is Acyl-CoA ligase ppsA of Aspergillus oryzae (strain ATCC 42149 / RIB 40) (Yellow koji mold).